The primary structure comprises 176 residues: Macro domain-containing protein mll7730 (176 aa).

One can recognise a Macro domain in the interval 1–174 (MSKALDRIRI…LYLRAVAALR (174 aa)).

This sequence belongs to the MacroD-type family.

The polypeptide is Macro domain-containing protein mll7730 (Mesorhizobium japonicum (strain LMG 29417 / CECT 9101 / MAFF 303099) (Mesorhizobium loti (strain MAFF 303099))).